The chain runs to 1337 residues: Zinc finger protein 335 (1337 aa).

Disordered stretches follow at residues 1 to 108 (MEEN…LVHS) and 198 to 226 (GPTS…PPAP). Low complexity-rich tracts occupy residues 31–45 (TSEA…AATV) and 54–63 (SGVGQSSDGG). A C2H2-type 1 zinc finger spans residues 248–271 (FKCKMCQYRSSTKATLLRHMRERH). Positions 278 to 444 (AAAAATGKRG…PPRRRGRPSR (167 aa)) are disordered. The span at 302 to 332 (DRPEEEEEDDDIVDAGAIDDLEEDSDYNPAE) shows a compositional bias: acidic residues. Basic residues predominate over residues 351–362 (RPRRRPGRPRKL). Basic and acidic residues predominate over residues 363–372 (PRLETSDLHD). Residues 378–388 (LVSSQSTQSPP) show a composition bias toward polar residues. 8 C2H2-type zinc fingers span residues 466–488 (YLCR…VNSH), 496–518 (FRCL…MFNH), 524–546 (YKCD…AAVH), 563–585 (FPCP…MKTH), 591–613 (HMCD…LLTH), 622–644 (FKCE…QLSH), 650–673 (FKCS…AVKH), and 679–702 (FACE…RCRH). 2 disordered regions span residues 733–767 (LKQQ…TPPL) and 963–999 (QCGG…ASHT). The segment covering 741 to 756 (PGPPLSSPGPEAPQEP) has biased composition (pro residues). Residues Ser-976 and Ser-1007 each carry the phosphoserine modification. 4 consecutive C2H2-type zinc fingers follow at residues 1019 to 1041 (FSCK…KRAH), 1047 to 1069 (FKCP…MAQH), 1075 to 1097 (HQCN…MLTH), and 1103 to 1126 (FSCH…QRLH). Lys-1022 participates in a covalent cross-link: Glycyl lysine isopeptide (Lys-Gly) (interchain with G-Cter in SUMO2). Ser-1149 is modified (phosphoserine).

This sequence belongs to the krueppel C2H2-type zinc-finger protein family. Interacts with NCOA6; may enhance ligand-dependent transcriptional activation by nuclear hormone receptors. Interacts with CNOT6. Interacts with CNOT9; the interaction is direct. Component of a nuclear receptor-mediated transcription complex composed of at least ZNF335, CCAR2 and EMSY; the complex stimulates the transcription of nuclear receptor target genes such as SOX9 and HOXA1. Within the complex interacts with EMSY and interacts (via C-terminus) with CCAR2. Interacts with members of histone H3'Lys4'(H3K4) methyltransferase complexes ASH2L, CXXC1, KMT2A/MLL1, RBBP5, SETD1A and WDR5. Component of a histone methylation complex composed of at least ZNF335, RBBP5, ASH2L and WDR5; the complex may have histone H3-specific methyltransferase activity, however does not have specificity for 'Lys-4' of histone H3. Interacts with RBBP5 and WDR5. Interacts with ASHL2. Components of this complex may associate with components of the ZNF335-CCAR2-EMSY nuclear receptor-mediated transcription complex to form a complex at least composed of ZNF335, HCFC1, CCAR2, EMSY, MKI67, RBBP5, ASH2L and WDR5. Within this complex also interacts with HCFC1 and MKI67. Expressed at low levels in cerebral cortex, hippocampus and cerebellum (at protein level).

It localises to the nucleus. Functionally, component or associated component of some histone methyltransferase complexes may regulate transcription through recruitment of those complexes on gene promoters. Enhances ligand-dependent transcriptional activation by nuclear hormone receptors. Plays an important role in neural progenitor cell proliferation and self-renewal through the regulation of specific genes involved brain development, including REST. Also controls the expression of genes involved in somatic development and regulates, for instance, lymphoblast proliferation. The protein is Zinc finger protein 335 (Znf335) of Mus musculus (Mouse).